The primary structure comprises 89 residues: Small ribosomal subunit protein uS15 (89 aa).

The protein belongs to the universal ribosomal protein uS15 family. Part of the 30S ribosomal subunit. Forms a bridge to the 50S subunit in the 70S ribosome, contacting the 23S rRNA.

In terms of biological role, one of the primary rRNA binding proteins, it binds directly to 16S rRNA where it helps nucleate assembly of the platform of the 30S subunit by binding and bridging several RNA helices of the 16S rRNA. Its function is as follows. Forms an intersubunit bridge (bridge B4) with the 23S rRNA of the 50S subunit in the ribosome. This is Small ribosomal subunit protein uS15 from Geobacillus kaustophilus (strain HTA426).